We begin with the raw amino-acid sequence, 164 residues long: ATP synthase subunit b (164 aa).

A helical transmembrane segment spans residues 7–25 (SFWLAVSFIIFVYLIYRPA).

This sequence belongs to the ATPase B chain family. In terms of assembly, F-type ATPases have 2 components, F(1) - the catalytic core - and F(0) - the membrane proton channel. F(1) has five subunits: alpha(3), beta(3), gamma(1), delta(1), epsilon(1). F(0) has three main subunits: a(1), b(2) and c(10-14). The alpha and beta chains form an alternating ring which encloses part of the gamma chain. F(1) is attached to F(0) by a central stalk formed by the gamma and epsilon chains, while a peripheral stalk is formed by the delta and b chains.

The protein resides in the cell inner membrane. In terms of biological role, f(1)F(0) ATP synthase produces ATP from ADP in the presence of a proton or sodium gradient. F-type ATPases consist of two structural domains, F(1) containing the extramembraneous catalytic core and F(0) containing the membrane proton channel, linked together by a central stalk and a peripheral stalk. During catalysis, ATP synthesis in the catalytic domain of F(1) is coupled via a rotary mechanism of the central stalk subunits to proton translocation. Functionally, component of the F(0) channel, it forms part of the peripheral stalk, linking F(1) to F(0). The protein is ATP synthase subunit b of Rickettsia felis (strain ATCC VR-1525 / URRWXCal2) (Rickettsia azadi).